A 162-amino-acid polypeptide reads, in one-letter code: Transcription elongation factor GreA (162 aa).

A coiled-coil region spans residues Gln9 to Glu38.

Belongs to the GreA/GreB family.

Functionally, necessary for efficient RNA polymerase transcription elongation past template-encoded arresting sites. The arresting sites in DNA have the property of trapping a certain fraction of elongating RNA polymerases that pass through, resulting in locked ternary complexes. Cleavage of the nascent transcript by cleavage factors such as GreA or GreB allows the resumption of elongation from the new 3'terminus. GreA releases sequences of 2 to 3 nucleotides. The polypeptide is Transcription elongation factor GreA (Desulfovibrio desulfuricans (strain ATCC 27774 / DSM 6949 / MB)).